A 204-amino-acid polypeptide reads, in one-letter code: Peptidyl-tRNA hydrolase (204 aa).

Residue Tyr-14 participates in tRNA binding. His-19 acts as the Proton acceptor in catalysis. TRNA-binding residues include Tyr-64, Asn-66, and Asn-112.

Belongs to the PTH family. As to quaternary structure, monomer.

It localises to the cytoplasm. It carries out the reaction an N-acyl-L-alpha-aminoacyl-tRNA + H2O = an N-acyl-L-amino acid + a tRNA + H(+). In terms of biological role, hydrolyzes ribosome-free peptidyl-tRNAs (with 1 or more amino acids incorporated), which drop off the ribosome during protein synthesis, or as a result of ribosome stalling. Its function is as follows. Catalyzes the release of premature peptidyl moieties from peptidyl-tRNA molecules trapped in stalled 50S ribosomal subunits, and thus maintains levels of free tRNAs and 50S ribosomes. This chain is Peptidyl-tRNA hydrolase, found in Nitrobacter hamburgensis (strain DSM 10229 / NCIMB 13809 / X14).